Here is a 740-residue protein sequence, read N- to C-terminus: F-BAR and double SH3 domains protein 2 (740 aa).

The 275-residue stretch at 8–282 (VKVTQELRNI…NSSKVVRDYN (275 aa)) folds into the F-BAR domain. The interval 303-323 (PCDSDTSRQLESETGTTEEHS) is disordered. Positions 307–323 (DTSRQLESETGTTEEHS) are enriched in basic and acidic residues. Positions 356–397 (GVALSEQSRAELEQKIDEARESIRKAEIIKLKAEARLDLLKQ) form a coiled coil. SH3 domains lie at 469-530 (NYPL…FPTS) and 567-629 (ASVC…ELSA). Positions 567–629 (ASVCFVKALY…PSVLVEELSA (63 aa)) are required and sufficient for location at clathrin-coated pits. Residues 629 to 645 (ASENGDTPWTREIQISP) are compositionally biased toward polar residues. The interval 629-740 (ASENGDTPWT…KMEDVEITLV (112 aa)) is disordered. Residues 646–657 (SPKPHTSLPPLP) show a composition bias toward pro residues. Phosphoserine is present on residues S675 and S681. The segment covering 675-706 (SQFFPRSPSANENSLHAESPGFSQASRQTPDT) has biased composition (polar residues).

Homodimer. Interacts (via SH3 domain 2) with ITSN1 (via SH3 domain 4). Recruited to clathrin-coated pits during a mid-to-late stage of assembly via interaction with ITSN1. Interacts (via SH3 domain 1) with WASL. Interacts with WAS. Interacts with CASK and MAGI1. CASK inhibits interaction with MAGI1. Post-translationally, phosphorylated. Phosphorylation on a Ser residue is important for recruitment to the cell membrane and for its role in promoting endocytosis. Detected in inner ear vestibula and in stereocilia in cochlear hair cell bundles (at protein level). Ubiquitous. Detected in testis, liver, brain cortex, cerebellum, kidney, organ of Corti, utricle, spiral ganglion, tongue and eye.

The protein resides in the cytoplasm. The protein localises to the cell junction. It localises to the membrane. Its subcellular location is the clathrin-coated pit. It is found in the cell membrane. The protein resides in the cell projection. The protein localises to the stereocilium. Adapter protein that plays a role in endocytosis via clathrin-coated pits. Contributes to the internalization of cell surface receptors, such as integrin ITGB1 and transferrin receptor. Promotes endocytosis of EGFR in cancer cells, and thereby contributes to the down-regulation of EGFR signaling. Recruited to clathrin-coated pits during a mid-to-late stage of assembly, where it is required for normal progress from U-shaped intermediate stage pits to terminal, omega-shaped pits. Binds to membranes enriched in phosphatidylinositol 3,4-bisphosphate or phosphatidylinositol 3,4,5-trisphosphate. When bound to membranes, promotes actin polymerization via its interaction with WAS and/or WASL which leads to the activation of the Arp2/3 complex. Does not promote actin polymerisation in the absence of membranes. The sequence is that of F-BAR and double SH3 domains protein 2 (Fchsd2) from Mus musculus (Mouse).